We begin with the raw amino-acid sequence, 319 residues long: Ornithine carbamoyltransferase (319 aa).

Carbamoyl phosphate is bound by residues 57 to 60 (STRT), Q84, R108, and 135 to 138 (HPCQ). Residues N166, D230, and 234–235 (SM) each bind L-ornithine. Residues 270 to 271 (CL) and R298 each bind carbamoyl phosphate.

It belongs to the aspartate/ornithine carbamoyltransferase superfamily. OTCase family.

Its subcellular location is the cytoplasm. The enzyme catalyses carbamoyl phosphate + L-ornithine = L-citrulline + phosphate + H(+). It functions in the pathway amino-acid biosynthesis; L-arginine biosynthesis; L-arginine from L-ornithine and carbamoyl phosphate: step 1/3. Reversibly catalyzes the transfer of the carbamoyl group from carbamoyl phosphate (CP) to the N(epsilon) atom of ornithine (ORN) to produce L-citrulline. In Bacillus subtilis (strain 168), this protein is Ornithine carbamoyltransferase (argF).